We begin with the raw amino-acid sequence, 62 residues long: Paralithocin 1 (62 aa).

The signal sequence occupies residues 1–23; that stretch reads MGPMKVLLVLLVVMVAAPHIADA. 4 cysteine pairs are disulfide-bonded: C29–C55, C33–C51, C37–C49, and C42–C52. Tyrosine amide; partial is present on Y61.

Belongs to the paralithocin family. Post-translationally, the amidated form is probably the active form.

Has weak antibacterial activity, mainly against marine Gram-positive bacteria like C.maltaromaticum (MIC=200 uM), C.mobile (MIC=100 uM), C.divergens (MIC=200 uM) and C.funditum (MIC=200 uM) but also against C.glutamicum (MIC=50 uM). Has very little or no activity against Gram-negative bacteria. In Paralithodes camtschaticus (Red king crab), this protein is Paralithocin 1.